Here is a 164-residue protein sequence, read N- to C-terminus: UPF0304 protein CKO_00501 (164 aa).

Belongs to the UPF0304 family.

The chain is UPF0304 protein CKO_00501 from Citrobacter koseri (strain ATCC BAA-895 / CDC 4225-83 / SGSC4696).